Here is a 201-residue protein sequence, read N- to C-terminus: Lymphotoxin-alpha (201 aa).

The signal sequence occupies residues 1-27 (MTSSGVLCLLGALSLQVLLLQPPGAQG). The interval 23–52 (PGAQGAPNPDNSHSSSPAPPQTAQHLSQKS) is disordered. Positions 31 to 51 (PDNSHSSSPAPPQTAQHLSQK) are enriched in polar residues. In terms of domain architecture, THD spans 60 to 201 (PAAHLVGDPS…SSVFFGAFAL (142 aa)). Asn93 carries N-linked (GlcNAc...) asparagine glycosylation. Residues Cys117 and Cys152 are joined by a disulfide bond.

The protein belongs to the tumor necrosis factor family. In terms of assembly, homotrimer, and heterotrimer of either two LTB and one LTA subunits or (less prevalent) two LTA and one LTB subunits. Interacts with TNFRSF14.

The protein localises to the secreted. Its subcellular location is the membrane. Its function is as follows. Cytokine that in its homotrimeric form binds to TNFRSF1A/TNFR1, TNFRSF1B/TNFBR and TNFRSF14/HVEM. In its heterotrimeric form with LTB binds to TNFRSF3/LTBR. Lymphotoxin is produced by lymphocytes and is cytotoxic for a wide range of tumor cells in vitro and in vivo. This Notamacropus eugenii (Tammar wallaby) protein is Lymphotoxin-alpha (LTA).